The following is a 187-amino-acid chain: Elongation factor P (187 aa).

It belongs to the elongation factor P family.

The protein resides in the cytoplasm. It functions in the pathway protein biosynthesis; polypeptide chain elongation. Involved in peptide bond synthesis. Stimulates efficient translation and peptide-bond synthesis on native or reconstituted 70S ribosomes in vitro. Probably functions indirectly by altering the affinity of the ribosome for aminoacyl-tRNA, thus increasing their reactivity as acceptors for peptidyl transferase. The chain is Elongation factor P from Mycolicibacterium gilvum (strain PYR-GCK) (Mycobacterium gilvum (strain PYR-GCK)).